The following is a 185-amino-acid chain: ATP synthase subunit delta (185 aa).

Belongs to the ATPase delta chain family. F-type ATPases have 2 components, F(1) - the catalytic core - and F(0) - the membrane proton channel. F(1) has five subunits: alpha(3), beta(3), gamma(1), delta(1), epsilon(1). F(0) has three main subunits: a(1), b(2) and c(10-14). The alpha and beta chains form an alternating ring which encloses part of the gamma chain. F(1) is attached to F(0) by a central stalk formed by the gamma and epsilon chains, while a peripheral stalk is formed by the delta and b chains.

Its subcellular location is the cell inner membrane. Functionally, f(1)F(0) ATP synthase produces ATP from ADP in the presence of a proton or sodium gradient. F-type ATPases consist of two structural domains, F(1) containing the extramembraneous catalytic core and F(0) containing the membrane proton channel, linked together by a central stalk and a peripheral stalk. During catalysis, ATP synthesis in the catalytic domain of F(1) is coupled via a rotary mechanism of the central stalk subunits to proton translocation. This protein is part of the stalk that links CF(0) to CF(1). It either transmits conformational changes from CF(0) to CF(1) or is implicated in proton conduction. This Coxiella burnetii (strain CbuK_Q154) (Coxiella burnetii (strain Q154)) protein is ATP synthase subunit delta.